Consider the following 336-residue polypeptide: Alcohol dehydrogenase, propanol-preferring (336 aa).

Cysteine 37, histidine 58, cysteine 89, cysteine 92, cysteine 95, cysteine 103, and cysteine 145 together coordinate Zn(2+).

It belongs to the zinc-containing alcohol dehydrogenase family. It depends on Zn(2+) as a cofactor.

It catalyses the reaction a primary alcohol + NAD(+) = an aldehyde + NADH + H(+). It carries out the reaction a secondary alcohol + NAD(+) = a ketone + NADH + H(+). Its function is as follows. Preferred specificity is towards 1-propanol. This Escherichia coli (strain K12) protein is Alcohol dehydrogenase, propanol-preferring (adhP).